A 216-amino-acid chain; its full sequence is Proenkephalin-A-B (216 aa).

Propeptides lie at residues 64–85 (MDEL…LAKN), 93–131 (EYDS…GEMN), 144–155 (STDLEDETRGIQ), 165–175 (VGRPEWWQDYQ), and 183–207 (TRFT…PDME). The interval 114–133 (PESAIYHDNNSETPGEMNKR) is disordered.

This sequence belongs to the opioid neuropeptide precursor family. Post-translationally, the N-terminal domain contains 6 conserved cysteines thought to be involved in disulfide bonding and/or processing.

The protein resides in the secreted. Its function is as follows. Enkephalin neuropeptides compete with and mimic the effects of opiate drugs. They play a role in a number of physiologic functions, including pain perception and responses to stress. The polypeptide is Proenkephalin-A-B (penk-b) (Xenopus laevis (African clawed frog)).